Consider the following 418-residue polypeptide: MFGRAPKKSDNTKYYEVLGVSKNATPEDLKKAYRKAAIKNHPDKGGDPEKFKEIGQAYEVLNDPEKREIYDQYGEEGLKEGMGGGGGVHDPFDIFQSFFGGGGFGGGGSSRGRRQRRGEDVVHPLKVSLEDLYNGTSKKLSLSRNVLCTKCKGKGSKSGASMNCASCQGSGMKVSIRQLGPGMIQQMQHPCNECKGTGEMISDKDRCPQCKGEKVVQQKKVLEVHVEKGMQNGQKITFPGEADEAPDTVTGDIVFVLQQKEHPKFKRKGDDLFYEHSLSLTEALCGFQFVLTHLDNRQLLIKSNPGEVIKPDQFKGINDEGMPMYQRPFMRGKLYIHFSVDFPDSLTPDQCKALESVLPSRNASRLTDMEIDECEETTMHDVNIEEEMRRKQHQQAQEAYDEDDEGHGGAQRVQCAQQ.

In terms of domain architecture, J spans 11–76; it reads NTKYYEVLGV…REIYDQYGEE (66 aa). A CR-type zinc finger spans residues 135–219; the sequence is GTSKKLSLSR…CKGEKVVQQK (85 aa). 4 CXXCXGXG motif repeats span residues 148-155, 164-171, 191-198, and 207-214; these read CTKCKGKG, CASCQGSG, CNECKGTG, and CPQCKGEK. The segment at 382–418 is disordered; that stretch reads VNIEEEMRRKQHQQAQEAYDEDDEGHGGAQRVQCAQQ. Cys415 bears the Cysteine methyl ester mark. Cys415 is lipidated: S-farnesyl cysteine. Positions 416–418 are cleaved as a propeptide — removed in mature form; it reads AQQ.

Its subcellular location is the membrane. Plays a continuous role in plant development probably in the structural organization of compartments. The sequence is that of DnaJ protein homolog 2 (LDJ2) from Allium porrum (Leek).